We begin with the raw amino-acid sequence, 310 residues long: MKTLIRKLTRTAITLVLVILAFIAIFRAWVYYTESPWTRDARFSADVVAIAPDVAGLITNVNVHDNQLVKKGQVLFTIDQPRYQKALAEAEADVAYYSVLAQEKRQEASRRNRLGVQAMSREEIDQANNVLQTVLHQLAKAQATRDLAKLDLERTVIRAPADGWVTNLNVYTGEFITRGSTAVALVKQNTFYVLAYMEETKLEGVRPGYRAEITPLGSNRVLKGTVDSIAAGVTNASSTRDAKGMATIDSNLEWVRLAQRVPVRIRLDAQPENLWPAGTTATVVVTGKDDRDESQDSFFRKMAHRLREFG.

The helical transmembrane segment at 12–32 (AITLVLVILAFIAIFRAWVYY) threads the bilayer.

It belongs to the membrane fusion protein (MFP) (TC 8.A.1) family.

It localises to the cell inner membrane. Its function is as follows. Forms an efflux pump with AaeB. This Escherichia fergusonii (strain ATCC 35469 / DSM 13698 / CCUG 18766 / IAM 14443 / JCM 21226 / LMG 7866 / NBRC 102419 / NCTC 12128 / CDC 0568-73) protein is p-hydroxybenzoic acid efflux pump subunit AaeA.